A 222-amino-acid chain; its full sequence is Phosphoribosylformylglycinamidine synthase subunit PurQ (222 aa).

A Glutamine amidotransferase type-1 domain is found at 2-222 (RTAVIQFPGS…FESLKGALVQ (221 aa)). The Nucleophile role is filled by Cys-87. Active-site residues include His-195 and Glu-197.

As to quaternary structure, part of the FGAM synthase complex composed of 1 PurL, 1 PurQ and 2 PurS subunits.

It is found in the cytoplasm. It catalyses the reaction N(2)-formyl-N(1)-(5-phospho-beta-D-ribosyl)glycinamide + L-glutamine + ATP + H2O = 2-formamido-N(1)-(5-O-phospho-beta-D-ribosyl)acetamidine + L-glutamate + ADP + phosphate + H(+). The enzyme catalyses L-glutamine + H2O = L-glutamate + NH4(+). The protein operates within purine metabolism; IMP biosynthesis via de novo pathway; 5-amino-1-(5-phospho-D-ribosyl)imidazole from N(2)-formyl-N(1)-(5-phospho-D-ribosyl)glycinamide: step 1/2. Functionally, part of the phosphoribosylformylglycinamidine synthase complex involved in the purines biosynthetic pathway. Catalyzes the ATP-dependent conversion of formylglycinamide ribonucleotide (FGAR) and glutamine to yield formylglycinamidine ribonucleotide (FGAM) and glutamate. The FGAM synthase complex is composed of three subunits. PurQ produces an ammonia molecule by converting glutamine to glutamate. PurL transfers the ammonia molecule to FGAR to form FGAM in an ATP-dependent manner. PurS interacts with PurQ and PurL and is thought to assist in the transfer of the ammonia molecule from PurQ to PurL. In Deinococcus geothermalis (strain DSM 11300 / CIP 105573 / AG-3a), this protein is Phosphoribosylformylglycinamidine synthase subunit PurQ.